The chain runs to 228 residues: Phosphoribosylformylglycinamidine synthase subunit PurQ (228 aa).

A Glutamine amidotransferase type-1 domain is found at 3-226; the sequence is FAVIVFPGSN…IANWRDSYAI (224 aa). The Nucleophile role is filled by Cys87. Catalysis depends on residues His195 and Glu197.

As to quaternary structure, part of the FGAM synthase complex composed of 1 PurL, 1 PurQ and 2 PurS subunits.

Its subcellular location is the cytoplasm. It catalyses the reaction N(2)-formyl-N(1)-(5-phospho-beta-D-ribosyl)glycinamide + L-glutamine + ATP + H2O = 2-formamido-N(1)-(5-O-phospho-beta-D-ribosyl)acetamidine + L-glutamate + ADP + phosphate + H(+). It carries out the reaction L-glutamine + H2O = L-glutamate + NH4(+). Its pathway is purine metabolism; IMP biosynthesis via de novo pathway; 5-amino-1-(5-phospho-D-ribosyl)imidazole from N(2)-formyl-N(1)-(5-phospho-D-ribosyl)glycinamide: step 1/2. Its function is as follows. Part of the phosphoribosylformylglycinamidine synthase complex involved in the purines biosynthetic pathway. Catalyzes the ATP-dependent conversion of formylglycinamide ribonucleotide (FGAR) and glutamine to yield formylglycinamidine ribonucleotide (FGAM) and glutamate. The FGAM synthase complex is composed of three subunits. PurQ produces an ammonia molecule by converting glutamine to glutamate. PurL transfers the ammonia molecule to FGAR to form FGAM in an ATP-dependent manner. PurS interacts with PurQ and PurL and is thought to assist in the transfer of the ammonia molecule from PurQ to PurL. This chain is Phosphoribosylformylglycinamidine synthase subunit PurQ, found in Oceanobacillus iheyensis (strain DSM 14371 / CIP 107618 / JCM 11309 / KCTC 3954 / HTE831).